Here is a 221-residue protein sequence, read N- to C-terminus: DNA repair and recombination protein RadB (221 aa).

It belongs to the eukaryotic RecA-like protein family. RadB subfamily.

Its function is as follows. Involved in DNA repair and in homologous recombination. May regulate the cleavage reactions of the branch-structured DNA. Has a very weak ATPase activity that is not stimulated by DNA. Binds DNA but does not promote DNA strands exchange. The chain is DNA repair and recombination protein RadB from Thermococcus gammatolerans (strain DSM 15229 / JCM 11827 / EJ3).